The primary structure comprises 61 residues: Small ribosomal subunit protein uS14 (61 aa).

Residues Cys-24, Cys-27, Cys-40, and Cys-43 each coordinate Zn(2+).

The protein belongs to the universal ribosomal protein uS14 family. Zinc-binding uS14 subfamily. Part of the 30S ribosomal subunit. Contacts proteins S3 and S10. Requires Zn(2+) as cofactor.

Its function is as follows. Binds 16S rRNA, required for the assembly of 30S particles and may also be responsible for determining the conformation of the 16S rRNA at the A site. The protein is Small ribosomal subunit protein uS14 of Streptococcus mutans serotype c (strain ATCC 700610 / UA159).